The chain runs to 118 residues: MASKFKQVILDLTVEKDKKDKKGGKASKQSEEEPHHLEEVENKKPGGNVRRKVRRLVPNFLWAIPNRHVDRNEGGEDVGRFVVQGTEVKRKTTEQQVRPYRRFRTPEPDNHYDFCLIP.

A disordered region spans residues 14 to 50 (VEKDKKDKKGGKASKQSEEEPHHLEEVENKKPGGNVR). Over residues 28–44 (KQSEEEPHHLEEVENKK) the composition is skewed to basic and acidic residues. Positions 30-88 (SEEEPHHLEEVENKKPGGNVRRKVRRLVPNFLWAIPNRHVDRNEGGEDVGRFVVQGTEV) are interaction with SIRT2. The tract at residues 30–118 (SEEEPHHLEE…DNHYDFCLIP (89 aa)) is interaction with alpha-tubulin. Residue Cys-115 coordinates Zn(2+).

This sequence belongs to the BEX family. As to quaternary structure, interacts with alpha-tubulin. Interacts with SIRT2. Post-translationally, ubiquitinated and degraded by the proteasome. Expressed in both Sertoli and germ cells as well as interstitial area of the testis (at protein level).

It is found in the cytoplasm. The protein resides in the cytoskeleton. The protein localises to the spindle pole. Its subcellular location is the nucleus. Its function is as follows. May play a role in microtubule deacetylation by negatively regulating the SIRT2 deacetylase activity toward alpha-tubulin and thereby participate in the control of cell cycle progression and genomic stability. In absence of reductive stress, acts as a pseudosubstrate for the CRL2(FEM1B) complex: associates with FEM1B via zinc, thereby preventing association between FEM1B and its substrates. This chain is Protein BEX4, found in Mus musculus (Mouse).